A 426-amino-acid chain; its full sequence is Serine--tRNA ligase (426 aa).

An L-serine-binding site is contributed by Thr233–Glu235. Arg264–Glu266 lines the ATP pocket. Glu287 provides a ligand contact to L-serine. Glu351–Ser354 is a binding site for ATP. Ser387 contributes to the L-serine binding site.

The protein belongs to the class-II aminoacyl-tRNA synthetase family. Type-1 seryl-tRNA synthetase subfamily. Homodimer. The tRNA molecule binds across the dimer.

Its subcellular location is the cytoplasm. It carries out the reaction tRNA(Ser) + L-serine + ATP = L-seryl-tRNA(Ser) + AMP + diphosphate + H(+). The enzyme catalyses tRNA(Sec) + L-serine + ATP = L-seryl-tRNA(Sec) + AMP + diphosphate + H(+). Its pathway is aminoacyl-tRNA biosynthesis; selenocysteinyl-tRNA(Sec) biosynthesis; L-seryl-tRNA(Sec) from L-serine and tRNA(Sec): step 1/1. Catalyzes the attachment of serine to tRNA(Ser). Is also able to aminoacylate tRNA(Sec) with serine, to form the misacylated tRNA L-seryl-tRNA(Sec), which will be further converted into selenocysteinyl-tRNA(Sec). In Stenotrophomonas maltophilia (strain R551-3), this protein is Serine--tRNA ligase.